The primary structure comprises 250 residues: MFFLINKLVMNFDAPSPWGIYFQDSATPQMEGLNELHDNIMYYLVVILFAVGWILLSIVINYVSTKSPISHKYLNHGTLIELIWTITPAVILILIAFPSFKLLYLMDEVSDPSMSVLAEGHQWYWSYQYPDFLDSNDQFIEFDSYIVPESDLDEGGLRMLEVDNRVVLPELTHVRFIITAGDVIHSFAAPALGIKCDAYPGRLNQVSVFINREGVFYGQCSEICGILHSSMPIVIESVSLEKFLIWLKEQ.

Residues 1-39 are Mitochondrial intermembrane-facing; that stretch reads MFFLINKLVMNFDAPSPWGIYFQDSATPQMEGLNELHDN. The helical transmembrane segment at 40 to 60 threads the bilayer; sequence IMYYLVVILFAVGWILLSIVI. The Mitochondrial matrix portion of the chain corresponds to 61-81; that stretch reads NYVSTKSPISHKYLNHGTLIE. The chain crosses the membrane as a helical span at residues 82 to 104; the sequence is LIWTITPAVILILIAFPSFKLLY. The Mitochondrial intermembrane portion of the chain corresponds to 105–250; the sequence is LMDEVSDPSM…EKFLIWLKEQ (146 aa). Residues His185, Cys220, Glu222, Cys224, His228, and Met231 each coordinate Cu cation. A Mg(2+)-binding site is contributed by Glu222.

Belongs to the cytochrome c oxidase subunit 2 family. As to quaternary structure, component of the cytochrome c oxidase (complex IV, CIV), a multisubunit enzyme composed of a catalytic core of 3 subunits and several supernumerary subunits. The complex exists as a monomer or a dimer and forms supercomplexes (SCs) in the inner mitochondrial membrane with ubiquinol-cytochrome c oxidoreductase (cytochrome b-c1 complex, complex III, CIII). Cu cation serves as cofactor.

The protein resides in the mitochondrion inner membrane. It catalyses the reaction 4 Fe(II)-[cytochrome c] + O2 + 8 H(+)(in) = 4 Fe(III)-[cytochrome c] + 2 H2O + 4 H(+)(out). Component of the cytochrome c oxidase, the last enzyme in the mitochondrial electron transport chain which drives oxidative phosphorylation. The respiratory chain contains 3 multisubunit complexes succinate dehydrogenase (complex II, CII), ubiquinol-cytochrome c oxidoreductase (cytochrome b-c1 complex, complex III, CIII) and cytochrome c oxidase (complex IV, CIV), that cooperate to transfer electrons derived from NADH and succinate to molecular oxygen, creating an electrochemical gradient over the inner membrane that drives transmembrane transport and the ATP synthase. Cytochrome c oxidase is the component of the respiratory chain that catalyzes the reduction of oxygen to water. Electrons originating from reduced cytochrome c in the intermembrane space (IMS) are transferred via the dinuclear copper A center (CU(A)) of subunit 2 and heme A of subunit 1 to the active site in subunit 1, a binuclear center (BNC) formed by heme A3 and copper B (CU(B)). The BNC reduces molecular oxygen to 2 water molecules using 4 electrons from cytochrome c in the IMS and 4 protons from the mitochondrial matrix. In Podospora anserina (strain S / ATCC MYA-4624 / DSM 980 / FGSC 10383) (Pleurage anserina), this protein is Cytochrome c oxidase subunit 2 (COII).